Reading from the N-terminus, the 263-residue chain is Alpha-tubulin N-acetyltransferase 2 (263 aa).

One can recognise an N-acetyltransferase domain in the interval 1-181 (MEIAFDLSSI…NKYAVFPNFF (181 aa)). Position 115–128 (115–128 (FFIVPTEQRSGNGF)) interacts with acetyl-CoA. 2 disordered regions span residues 191-224 (TPRQ…RPRH) and 236-263 (FPRG…EPIW). The segment covering 200–212 (RASSAVSSHTTSR) has biased composition (low complexity). Residues 253–263 (LTRDQRHEPIW) are compositionally biased toward basic and acidic residues.

It belongs to the acetyltransferase ATAT1 family.

The catalysed reaction is L-lysyl-[alpha-tubulin] + acetyl-CoA = N(6)-acetyl-L-lysyl-[alpha-tubulin] + CoA + H(+). In terms of biological role, specifically acetylates 'Lys-40' in alpha-tubulin/mec-12 on the lumenal side of microtubules. Promotes microtubule destabilization and accelerates microtubule dynamics; this activity may be independent of acetylation activity. Acetylates alpha-tubulin with a slow enzymatic rate, due to a catalytic site that is not optimized for acetyl transfer. Enters the microtubule through each end and diffuses quickly throughout the lumen of microtubules. Acetylates only long/old microtubules because of its slow acetylation rate since it does not have time to act on dynamically unstable microtubules before the enzyme is released. Required for the maintenance of touch receptor neurons and possibly other type of neurons involved in locomotion. This Caenorhabditis briggsae protein is Alpha-tubulin N-acetyltransferase 2 (atat-2).